The primary structure comprises 158 residues: 6,7-dimethyl-8-ribityllumazine synthase (158 aa).

5-amino-6-(D-ribitylamino)uracil contacts are provided by residues F23, 61–63 (SFE), and 85–87 (AVI). Residue 90 to 91 (ET) participates in (2S)-2-hydroxy-3-oxobutyl phosphate binding. H93 acts as the Proton donor in catalysis. Position 118 (F118) interacts with 5-amino-6-(D-ribitylamino)uracil. (2S)-2-hydroxy-3-oxobutyl phosphate is bound at residue R132.

Belongs to the DMRL synthase family.

The enzyme catalyses (2S)-2-hydroxy-3-oxobutyl phosphate + 5-amino-6-(D-ribitylamino)uracil = 6,7-dimethyl-8-(1-D-ribityl)lumazine + phosphate + 2 H2O + H(+). It participates in cofactor biosynthesis; riboflavin biosynthesis; riboflavin from 2-hydroxy-3-oxobutyl phosphate and 5-amino-6-(D-ribitylamino)uracil: step 1/2. Functionally, catalyzes the formation of 6,7-dimethyl-8-ribityllumazine by condensation of 5-amino-6-(D-ribitylamino)uracil with 3,4-dihydroxy-2-butanone 4-phosphate. This is the penultimate step in the biosynthesis of riboflavin. The chain is 6,7-dimethyl-8-ribityllumazine synthase from Prochlorococcus marinus (strain MIT 9515).